Consider the following 335-residue polypeptide: DNA polymerase beta (335 aa).

Lysine 41 is covalently cross-linked (Glycyl lysine isopeptide (Lys-Gly) (interchain with G-Cter in ubiquitin)). Residue lysine 60 coordinates K(+). Lysine 60 contributes to the Na(+) binding site. A Glycyl lysine isopeptide (Lys-Gly) (interchain with G-Cter in ubiquitin) cross-link involves residue lysine 61. Positions 62 and 65 each coordinate K(+). 2 residues coordinate Na(+): leucine 62 and valine 65. Residue lysine 72 is the Nucleophile; Schiff-base intermediate with DNA; for 5'-dRP lyase activity of the active site. Lysine 72 bears the N6-acetyllysine mark. Lysine 81 is covalently cross-linked (Glycyl lysine isopeptide (Lys-Gly) (interchain with G-Cter in ubiquitin)). Residue arginine 83 is modified to Omega-N-methylarginine; by PRMT6. K(+)-binding residues include threonine 101, valine 103, and isoleucine 106. Threonine 101, valine 103, and isoleucine 106 together coordinate Na(+). Arginine 149 contributes to the a 2'-deoxyribonucleoside 5'-triphosphate binding site. At arginine 152 the chain carries Omega-N-methylarginine; by PRMT6. A 2'-deoxyribonucleoside 5'-triphosphate-binding residues include serine 180, arginine 183, glycine 189, and aspartate 190. Positions 183-192 are DNA-binding; that stretch reads RGAESSGDMD. Residues aspartate 190, aspartate 192, and aspartate 256 each coordinate Mg(2+).

The protein belongs to the DNA polymerase type-X family. In terms of assembly, monomer. Binds single-stranded DNA (ssDNA). Interacts with APEX1, LIG1, LIG3, FEN1, PCNA and XRCC1. Interacts with HUWE1/ARF-BP1, STUB1/CHIP and USP47. Interacts with FAM168A. Mg(2+) is required as a cofactor. In terms of processing, methylation by PRMT6 stimulates the polymerase activity by enhancing DNA binding and processivity. Post-translationally, ubiquitinated at Lys-41, Lys-61 and Lys-81: monoubiquitinated by HUWE1/ARF-BP1. Monoubiquitinated protein is then the target of STUB1/CHIP, which catalyzes polyubiquitination from monoubiquitin, leading to degradation by the proteasome. USP47 mediates the deubiquitination of monoubiquitinated protein, preventing polyubiquitination by STUB1/CHIP and its subsequent degradation.

It is found in the nucleus. The protein resides in the cytoplasm. The enzyme catalyses DNA(n) + a 2'-deoxyribonucleoside 5'-triphosphate = DNA(n+1) + diphosphate. It carries out the reaction a 5'-end 2'-deoxyribose-2'-deoxyribonucleotide-DNA = (2E,4S)-4-hydroxypenten-2-al-5-phosphate + a 5'-end 5'-phospho-2'-deoxyribonucleoside-DNA + H(+). It catalyses the reaction 2'-deoxyribonucleotide-(2'-deoxyribose 5'-phosphate)-2'-deoxyribonucleotide-DNA = a 3'-end 2'-deoxyribonucleotide-(2,3-dehydro-2,3-deoxyribose 5'-phosphate)-DNA + a 5'-end 5'-phospho-2'-deoxyribonucleoside-DNA + H(+). Functionally, repair polymerase that plays a key role in base-excision repair. During this process, the damaged base is excised by specific DNA glycosylases, the DNA backbone is nicked at the abasic site by an apurinic/apyrimidic (AP) endonuclease, and POLB removes 5'-deoxyribose-phosphate from the preincised AP site acting as a 5'-deoxyribose-phosphate lyase (5'-dRP lyase); through its DNA polymerase activity, it adds one nucleotide to the 3' end of the arising single-nucleotide gap. Conducts 'gap-filling' DNA synthesis in a stepwise distributive fashion rather than in a processive fashion as for other DNA polymerases. It is also able to cleave sugar-phosphate bonds 3' to an intact AP site, acting as an AP lyase. This Bos taurus (Bovine) protein is DNA polymerase beta (POLB).